Consider the following 488-residue polypeptide: Protein kinase C and casein kinase substrate in neurons 2 protein (488 aa).

In terms of domain architecture, F-BAR spans 11-282; sequence VEVSSDSFWE…SIKAADAVED (272 aa). Residues 25–274 adopt a coiled-coil conformation; that stretch reads KRTVKRIDDG…GIYRELEQSI (250 aa). Position 53 is an N6-acetyllysine (Lys-53). Positions 163-176 are enriched in basic and acidic residues; the sequence is CKEEKLAVSREANS. The segment at 163–183 is disordered; the sequence is CKEEKLAVSREANSKADPSLN. Ser-273 bears the Phosphoserine mark. Ser-315 bears the Phosphoserine; by PKC mark. The tract at residues 316 to 429 is disordered; that stretch reads RREKKKAADG…PFDEDTTSGT (114 aa). Residues 329-364 are compositionally biased toward polar residues; that stretch reads TGINQTGDQSGQNKPSSNLSVPSNPAQSTQLQSSYN. The NPF1 signature appears at 364-366; sequence NPF. Phosphoserine; by IKKB is present on Ser-375. Over residues 386–396 the composition is skewed to polar residues; it reads NVSSYEKTQNY. Phosphoserine is present on Ser-401. Residues 406–418 are compositionally biased toward polar residues; that stretch reads NNPFSSTDANGDS. The NPF2 motif lies at 407-409; it reads NPF. An NPF3 motif is present at residues 419–421; sequence NPF. The region spanning 428 to 488 is the SH3 domain; that stretch reads GTEVRVRALY…YPANYVEAIQ (61 aa). Ser-448 carries the phosphoserine modification.

Belongs to the PACSIN family. As to quaternary structure, homodimer. May form heterooligomers with other PACSINs. Interacts (via NPF motifs) with EHD1 (via EH domain). Interacts with EHD3. Interacts (via the SH3 domain) with MICALL1. Interacts with RAC1. Interacts (via SH3 domain) with DNM1, SYN1, SYNJ1 and WASL. Interacts with CAV1. Interacts with TRPV4. Forms a complex with EHD4 and MICALL1; the complex controls CDH5 trafficking and coordinates angiogenesis. Phosphorylated by casein kinase 2 (CK2) and protein kinase C (PKC). Phosphorylation by PKC probably decreases the membrane binding and tubulation capacities of PACSIN2, thereby modulating the lifetime of caveolae. In terms of tissue distribution, widely expressed (at protein level). Isoforms 1/3 are predominantly expressed in heart and in PC-12 cells, a pheochromocytoma cell line (at protein level). Isoforms 2/4 are widely expressed with highest levels in muscle, testis and brain (at protein level).

The protein resides in the cytoplasm. The protein localises to the cytoskeleton. Its subcellular location is the cytoplasmic vesicle membrane. It is found in the cell projection. It localises to the ruffle membrane. The protein resides in the early endosome. The protein localises to the recycling endosome membrane. Its subcellular location is the cell membrane. It is found in the membrane. It localises to the caveola. The protein resides in the cell junction. The protein localises to the adherens junction. Regulates the morphogenesis and endocytosis of caveolae. Lipid-binding protein that is able to promote the tubulation of the phosphatidic acid-containing membranes it preferentially binds. Plays a role in intracellular vesicle-mediated transport. Involved in the endocytosis of cell-surface receptors like the EGF receptor, contributing to its internalization in the absence of EGF stimulus. Facilitates endothelial front-rear polarity during migration by recruiting EHD4 and MICALL1 to asymmetric adherens junctions between leader and follower cells. This chain is Protein kinase C and casein kinase substrate in neurons 2 protein (Pacsin2), found in Rattus norvegicus (Rat).